We begin with the raw amino-acid sequence, 266 residues long: Probable septum site-determining protein MinC (266 aa).

The interval I98–Q146 is disordered. The span at D109 to K124 shows a compositional bias: basic and acidic residues.

Belongs to the MinC family. As to quaternary structure, interacts with MinD and FtsZ.

Cell division inhibitor that blocks the formation of polar Z ring septums. Rapidly oscillates between the poles of the cell to destabilize FtsZ filaments that have formed before they mature into polar Z rings. Prevents FtsZ polymerization. This is Probable septum site-determining protein MinC from Allorhizobium ampelinum (strain ATCC BAA-846 / DSM 112012 / S4) (Agrobacterium vitis (strain S4)).